Reading from the N-terminus, the 1077-residue chain is MLSAGSIDVSSQNIAVAGSSVVADKDIRLRAQENLTVSTAQQSESGTQLFEQKKSGLMSTGGIGVFIGTSRQKTTDQTQTVSHIGSTVGSLTGNVRLEAGNQLTLHGSDVVAGKDLALTGADVAISAAENSRSQQYTAESKQSGLTVALSGPVGSAVNTAVTTAKAAREENTGRLAGLQGVKAALSGVQAVQAGQLVQAQGGGITEMVGVSVSLGSQKSSSQQQQEQTQVSGSALTAGNNLSIKATGGGNAANSGDILIAGSQLKAGGDTRLDAARDVQLLGAANRQKTDGSNSSRGGSIGVSVGGSGLSVFANANKGQGNERGDGTFWTETTVDSGGMFSLRSGRDTTLTGAQVSAETVKADVGRNLTLQSQQDRDNYDAKQSRASGGISVPVAGGGAAVNLSMSRDRLSSQYDSVQAQTGIFAGSGGVDIRVGEHTQLDGAVIASTAAADKNTLDTGTLGFSDIKNKAVFTVEHQGGSLSTGGPVGSDLLSNLGGMVLAGLGNGGYAEGTTQAAVSEGTITVRDTENQQQNVDDLSRDTGNANGSIGPIFDKEKEQNRLKEVQLIGEIGGQALDIASTQGKIIATHAANDKMKAVKPEDIVAAEKQWEKAHPGKAATAEDINQQIYQTAYNQAFNESGFGTGGPVQRGMQAAIAAVQGLAGGNMGAALTGASAPYLAGVIKQSTGDNPAANTMAHAVLGAVTAYASGNHALAGAAGAATAELMAPTIISALGWDKNTLTEGQKQAVSALSTLAAGLAGGLTGDSTADALAGGQAGKNAVENNYLNSTQALTFDKELSDCRKSGGNCQAVIDKWKKVSDEQSVKLDETLKNNPLEAQVWDKEVAQGGIAITERPGWLSSLGADVMSSEEAKAYVQQWNGQDLSKIDVNSPGWTKFAAFASDPENQVAVASLGMLGKDLTKAALSYMGRNTSTATVSASSVGMKWGQGNMKQGMPWEDYVGKTLPVGSRLPPNFKTYDYFDRATGAVVSAKSLDTQTMAKLSNPNQVYSSIKKNIDVTAKFEKASLSGVTVNSSMITSKEVRLAVPVNTTKAQWTEINRAIEYGKNQGVKVTVTQVK.

Positions 67–384 (IGTSRQKTTD…DRDNYDAKQS (318 aa)) are FHA-2. The segment covering 531–546 (QQNVDDLSRDTGNANG) has biased composition (polar residues). The segment at 531 to 555 (QQNVDDLSRDTGNANGSIGPIFDKE) is disordered. The short motif at 781–784 (VENN) is the VENN CT cleavage motif element. Residues 954–1077 (MPWEDYVGKT…GVKVTVTQVK (124 aa)) are DNase activity.

Interacts with cognate immunity protein CdiI-YPIII, which blocks its toxic DNase activity. Zn(2+) serves as cofactor.

It localises to the target cell. It is found in the target cell cytoplasm. In terms of biological role, toxic component of a toxin-immunity protein module, which functions as a cellular contact-dependent growth inhibition (CDI) system. CDI modules allow bacteria to communicate with and inhibit the growth of closely related neighboring bacteria in a contact-dependent fashion. The C-terminal 123 residues (954-1077) has DNase activity in the presence of Zn(2+), converting supercoiled DNA into open-circular form. Toxic activity is neutralized by coexpression of the cognate immunity protein CdiI-YPIII, but not by non-cognate immunity proteins from other toxin-immunity modules. Expression of the DNase domain as a chimera allows bacteria to attack other non-immune bacteria which become filamentous and have lost DNA staining. Its function is as follows. The CdiA protein is thought to be exported from the cell through the central lumen of CdiB, the other half of its two-partner system (TPS). The TPS domain probably remains associated with CdiB while the FHA-1 domain forms an extended filament with the receptor-binding domain (RBD) at its extremity; in the secretion arrested state the C-terminus of the RBD and YP domains form a hairpin-like structure as the FHA-2, PT and CT domains are periplasmic. The YP domain is probably responsible for this arrest at the point where it re-enters the host cell periplasm. Upon binding to a target cell outer membrane receptor a signal is transmitted to activate secretion. The filament elongates slightly, the rest of CdiA is secreted and the FHA-2 domain becomes stably associated with the target cell's outer membrane where it facilitates entry of the toxic CT domain into the target cell periplasm. From there the toxic CT domain is cleaved and gains access to the target cell cytoplasm via an inner membrane protein. The sequence is that of Deoxyribonuclease CdiA from Yersinia pseudotuberculosis serotype O:3 (strain YPIII).